Here is a 238-residue protein sequence, read N- to C-terminus: Survival of motor neuron-related-splicing factor 30 (238 aa).

Positions 72-132 constitute a Tudor domain; sequence SWKVGEKCMA…RPVEEGRKAK (61 aa). The short motif at 142 to 160 is the Nuclear localization signal element; that stretch reads KKEMIAAQREYKKKKALKK.

This sequence belongs to the SMN family. As to quaternary structure, associates with spliceosomes.

It is found in the nucleus speckle. It localises to the nucleus. Its subcellular location is the cajal body. Involved in spliceosome assembly. This Xenopus tropicalis (Western clawed frog) protein is Survival of motor neuron-related-splicing factor 30 (smndc1).